A 352-amino-acid chain; its full sequence is NAD(P)H pyrophosphatase NUDT13, mitochondrial (352 aa).

A mitochondrion-targeting transit peptide spans M1–L20. The 128-residue stretch at P196 to S323 folds into the Nudix hydrolase domain. A Nudix box motif is present at residues R216–E240.

This sequence belongs to the Nudix hydrolase family. Mg(2+) serves as cofactor. Requires Mn(2+) as cofactor.

The protein localises to the mitochondrion. The enzyme catalyses NADH + H2O = reduced beta-nicotinamide D-ribonucleotide + AMP + 2 H(+). The catalysed reaction is NAD(+) + H2O = beta-nicotinamide D-ribonucleotide + AMP + 2 H(+). It carries out the reaction NADPH + H2O = reduced beta-nicotinamide D-ribonucleotide + adenosine 2',5'-bisphosphate + 2 H(+). Its function is as follows. NAD(P)H pyrophosphatase that hydrolyzes NADH into NMNH and AMP, and NADPH into NMNH and 2',5'-ADP. Has a marked preference for the reduced pyridine nucleotides. Does not show activity toward NAD-capped RNAs; the NAD-cap is an atypical cap present at the 5'-end of some RNAs. The sequence is that of NAD(P)H pyrophosphatase NUDT13, mitochondrial from Mus musculus (Mouse).